Reading from the N-terminus, the 101-residue chain is MMIVTIEKSLYDRLREEAERRETSVSAVLRQLLLNYFNIEDDTKSYRKENVKNVIIRVGEKEYVRLQVHMKKENELIIKNELKRRGMSVNQLLKNEILLTA.

This is an uncharacterized protein from Sulfolobus islandicus filamentous virus (isolate Iceland/Hveragerdi) (SIFV).